The sequence spans 262 residues: Protein CUSTOS (262 aa).

Disordered stretches follow at residues 1 to 79 (MAAP…LQTT) and 126 to 262 (FTSV…IPAN). Residues 9-18 (SDSESSNSSS) are compositionally biased toward low complexity. The span at 51–61 (ANSQLSTSQPS) shows a compositional bias: polar residues. Ser61 is subject to Phosphoserine. At Thr79 the chain carries Phosphothreonine. At Ser138 the chain carries Phosphoserine. Thr182 carries the phosphothreonine modification. Positions 188 to 199 (KKKRKLKKKAKK) are enriched in basic residues. Low complexity predominate over residues 200–209 (VASVDSAVAA). Over residues 210 to 221 (TTPTSMATVQKQ) the composition is skewed to polar residues. Thr211 is modified (phosphothreonine). The Nucleolar localization signal (NLS) motif lies at 236 to 241 (KKKKKA).

Belongs to the CUSTOS family.

The protein resides in the nucleus envelope. In terms of biological role, plays a role in the regulation of Wnt signaling pathway during early development. This Homo sapiens (Human) protein is Protein CUSTOS.